We begin with the raw amino-acid sequence, 221 residues long: Probable transaldolase (221 aa).

Catalysis depends on Lys-87, which acts as the Schiff-base intermediate with substrate.

This sequence belongs to the transaldolase family. Type 3B subfamily.

It is found in the cytoplasm. The enzyme catalyses D-sedoheptulose 7-phosphate + D-glyceraldehyde 3-phosphate = D-erythrose 4-phosphate + beta-D-fructose 6-phosphate. Its pathway is carbohydrate degradation; pentose phosphate pathway; D-glyceraldehyde 3-phosphate and beta-D-fructose 6-phosphate from D-ribose 5-phosphate and D-xylulose 5-phosphate (non-oxidative stage): step 2/3. Functionally, transaldolase is important for the balance of metabolites in the pentose-phosphate pathway. The protein is Probable transaldolase of Syntrophobacter fumaroxidans (strain DSM 10017 / MPOB).